The following is a 236-amino-acid chain: Thioredoxin-like 2-2, chloroplastic (236 aa).

Residues 1 to 82 (MAGVVRLTTT…LRRPKSQVVR (82 aa)) constitute a chloroplast transit peptide. The 138-residue stretch at 83 to 220 (VKVDENVAET…QLELGITLQT (138 aa)) folds into the Thioredoxin domain. Active-site nucleophile residues include Cys-135 and Cys-138. Cys-135 and Cys-138 form a disulfide bridge.

It belongs to the thioredoxin family.

It is found in the plastid. It localises to the chloroplast. Thiol-disulfide oxidoreductase that may participate in various redox reactions. Possesses insulin disulfide bonds reducing activity. This Arabidopsis thaliana (Mouse-ear cress) protein is Thioredoxin-like 2-2, chloroplastic.